A 69-amino-acid chain; its full sequence is Large ribosomal subunit protein bL31 (69 aa).

The Zn(2+) site is built by cysteine 17, cysteine 19, cysteine 37, and cysteine 40.

It belongs to the bacterial ribosomal protein bL31 family. Type A subfamily. In terms of assembly, part of the 50S ribosomal subunit. Zn(2+) serves as cofactor.

Its function is as follows. Binds the 23S rRNA. The protein is Large ribosomal subunit protein bL31 of Caldicellulosiruptor bescii (strain ATCC BAA-1888 / DSM 6725 / KCTC 15123 / Z-1320) (Anaerocellum thermophilum).